The primary structure comprises 64 residues: Large ribosomal subunit protein bL33c (64 aa).

It belongs to the bacterial ribosomal protein bL33 family.

The protein resides in the plastid. Its subcellular location is the chloroplast. The polypeptide is Large ribosomal subunit protein bL33c (Phaeodactylum tricornutum (strain CCAP 1055/1)).